We begin with the raw amino-acid sequence, 56 residues long: Large ribosomal subunit protein bL32 (56 aa).

Residues 1 to 34 form a disordered region; the sequence is MAVQQNKPSRSKRGMRRAHDALKTSTISVDKTSG.

It belongs to the bacterial ribosomal protein bL32 family.

The sequence is that of Large ribosomal subunit protein bL32 from Baumannia cicadellinicola subsp. Homalodisca coagulata.